The following is a 212-amino-acid chain: Large ribosomal subunit protein uL1 (212 aa).

It belongs to the universal ribosomal protein uL1 family. In terms of assembly, part of the 50S ribosomal subunit.

Its function is as follows. Binds directly to 23S rRNA. Probably involved in E site tRNA release. In terms of biological role, protein L1 is also a translational repressor protein, it controls the translation of its operon by binding to its mRNA. The chain is Large ribosomal subunit protein uL1 from Methanothermobacter thermautotrophicus (strain ATCC 29096 / DSM 1053 / JCM 10044 / NBRC 100330 / Delta H) (Methanobacterium thermoautotrophicum).